The chain runs to 218 residues: Imidazole glycerol phosphate synthase subunit HisH (218 aa).

One can recognise a Glutamine amidotransferase type-1 domain in the interval 12–218; sequence SIVVVDYGLG…RNFVDYCADQ (207 aa). Catalysis depends on Cys-88, which acts as the Nucleophile. Catalysis depends on residues His-196 and Glu-198.

As to quaternary structure, heterodimer of HisH and HisF.

The protein resides in the cytoplasm. It carries out the reaction 5-[(5-phospho-1-deoxy-D-ribulos-1-ylimino)methylamino]-1-(5-phospho-beta-D-ribosyl)imidazole-4-carboxamide + L-glutamine = D-erythro-1-(imidazol-4-yl)glycerol 3-phosphate + 5-amino-1-(5-phospho-beta-D-ribosyl)imidazole-4-carboxamide + L-glutamate + H(+). It catalyses the reaction L-glutamine + H2O = L-glutamate + NH4(+). It participates in amino-acid biosynthesis; L-histidine biosynthesis; L-histidine from 5-phospho-alpha-D-ribose 1-diphosphate: step 5/9. Its function is as follows. IGPS catalyzes the conversion of PRFAR and glutamine to IGP, AICAR and glutamate. The HisH subunit catalyzes the hydrolysis of glutamine to glutamate and ammonia as part of the synthesis of IGP and AICAR. The resulting ammonia molecule is channeled to the active site of HisF. This Halobacterium salinarum (strain ATCC 700922 / JCM 11081 / NRC-1) (Halobacterium halobium) protein is Imidazole glycerol phosphate synthase subunit HisH.